Reading from the N-terminus, the 500-residue chain is Pentatricopeptide repeat-containing protein At1g06580 (500 aa).

PPR repeat units lie at residues 78 to 112 (SIVD…GISH), 113 to 147 (DLYS…GFEP), 148 to 182 (SIVT…GYEP), 183 to 217 (NVVI…GIRP), 218 to 252 (DVVT…GISP), 253 to 287 (DVIT…SVNP), 288 to 322 (NIVT…GFFP), 323 to 357 (NAVT…GVDG), 358 to 392 (DTFT…GVHP), 393 to 427 (DMYT…KTVV), 428 to 462 (GIIT…GVSP), and 463 to 498 (DVIT…GLMP).

It belongs to the PPR family. P subfamily.

In Arabidopsis thaliana (Mouse-ear cress), this protein is Pentatricopeptide repeat-containing protein At1g06580.